The primary structure comprises 354 residues: Rhodopsin (354 aa).

At 1–36 (MNGTEGPAFYVPMSNATGVVRSPYEYPQYYLVAPWA) the chain is on the extracellular side. Residues Asn2 and Asn15 are each glycosylated (N-linked (GlcNAc...) asparagine). Residues 37–61 (YGLLAAYMFFLIITGFPVNFLTLYV) form a helical membrane-spanning segment. Over 62–73 (TIEHKKLRTPLN) the chain is Cytoplasmic. Residues 74-96 (YILLNLAIADLFMVFGGFTTTMY) traverse the membrane as a helical segment. At 97-110 (TSLHGYFVFGRLGC) the chain is on the extracellular side. The cysteines at positions 110 and 187 are disulfide-linked. A helical membrane pass occupies residues 111 to 133 (NLEGFFATLGGEMGLWSLVVLAI). Positions 134-136 (ERW) match the 'Ionic lock' involved in activated form stabilization motif. Topologically, residues 134-152 (ERWMVVCKPVSNFRFGENH) are cytoplasmic. The chain crosses the membrane as a helical span at residues 153-173 (AIMGVAFTWVMACSCAVPPLV). The Extracellular portion of the chain corresponds to 174–202 (GWSRYIPEGMQCSCGVDYYTRTPGVNNES). N-linked (GlcNAc...) asparagine glycosylation is present at Asn200. The chain crosses the membrane as a helical span at residues 203–224 (FVIYMFIVHFFIPLIVIFFCYG). At 225-252 (RLVCTVKEAAAQQQESETTQRAEREVTR) the chain is on the cytoplasmic side. Residues 253–274 (MVIIMVIAFLICWLPYAGVAWY) form a helical membrane-spanning segment. Residues 275–286 (IFTHQGSEFGPV) are Extracellular-facing. A helical transmembrane segment spans residues 287-308 (FMTLPAFFAKTSAVYNPCIYIC). At Lys296 the chain carries N6-(retinylidene)lysine. Residues 309-354 (MNKQFRHCMITTLCCGKNPFEEEEGASTTASKTEASSVSSSSVSPA) are Cytoplasmic-facing. Residues 333–354 (GASTTASKTEASSVSSSSVSPA) form a disordered region. A compositionally biased stretch (low complexity) spans 334–354 (ASTTASKTEASSVSSSSVSPA).

The protein belongs to the G-protein coupled receptor 1 family. Opsin subfamily. Post-translationally, phosphorylated on some or all of the serine and threonine residues present in the C-terminal region. In terms of processing, contains one covalently linked retinal chromophore. As to expression, retinal rod photoreceptor cells, predominantly in the outer segments (at protein level). Retinal rod photoreceptor cells.

Its subcellular location is the membrane. It localises to the cell projection. The protein localises to the cilium. The protein resides in the photoreceptor outer segment. Photoreceptor required for image-forming vision at low light intensity. While most salt water fish species use retinal as chromophore, most freshwater fish use 3-dehydroretinal, or a mixture of retinal and 3-dehydroretinal. Light-induced isomerization of 11-cis to all-trans retinal triggers a conformational change that activates signaling via G-proteins. Subsequent receptor phosphorylation mediates displacement of the bound G-protein alpha subunit by arrestin and terminates signaling. This is Rhodopsin (rho) from Danio rerio (Zebrafish).